Consider the following 57-residue polypeptide: Protein translocase subunit SecE (57 aa).

Residues 33 to 53 (GLGILLVGFIGFVIFSIMTFV) form a helical membrane-spanning segment.

Belongs to the SecE/SEC61-gamma family. Component of the Sec protein translocase complex. Heterotrimer consisting of SecY (alpha), SecG (beta) and SecE (gamma) subunits. The heterotrimers can form oligomers, although 1 heterotrimer is thought to be able to translocate proteins. Interacts with the ribosome. May interact with SecDF, and other proteins may be involved.

The protein localises to the cell membrane. Its function is as follows. Essential subunit of the Sec protein translocation channel SecYEG. Clamps together the 2 halves of SecY. May contact the channel plug during translocation. In Natronomonas pharaonis (strain ATCC 35678 / DSM 2160 / CIP 103997 / JCM 8858 / NBRC 14720 / NCIMB 2260 / Gabara) (Halobacterium pharaonis), this protein is Protein translocase subunit SecE.